Consider the following 327-residue polypeptide: Methionine import ATP-binding protein MetN (327 aa).

The region spanning 3–239 (VELKNIEKIY…PKHAVTKELL (237 aa)) is the ABC transporter domain. ATP is bound at residue 36–43 (GYSGAGKS).

It belongs to the ABC transporter superfamily. Methionine importer (TC 3.A.1.24) family. The complex is composed of two ATP-binding proteins (MetN), two transmembrane proteins (MetI) and a solute-binding protein (MetQ).

The protein localises to the cell inner membrane. The enzyme catalyses L-methionine(out) + ATP + H2O = L-methionine(in) + ADP + phosphate + H(+). It carries out the reaction D-methionine(out) + ATP + H2O = D-methionine(in) + ADP + phosphate + H(+). Functionally, part of the ABC transporter complex MetNIQ involved in methionine import. Responsible for energy coupling to the transport system. This Helicobacter pylori (strain HPAG1) protein is Methionine import ATP-binding protein MetN.